Reading from the N-terminus, the 303-residue chain is Glycine--tRNA ligase alpha subunit (303 aa).

It belongs to the class-II aminoacyl-tRNA synthetase family. As to quaternary structure, tetramer of two alpha and two beta subunits.

The protein localises to the cytoplasm. The catalysed reaction is tRNA(Gly) + glycine + ATP = glycyl-tRNA(Gly) + AMP + diphosphate. The chain is Glycine--tRNA ligase alpha subunit from Methylobacterium radiotolerans (strain ATCC 27329 / DSM 1819 / JCM 2831 / NBRC 15690 / NCIMB 10815 / 0-1).